The following is a 349-amino-acid chain: tRNA-specific 2-thiouridylase MnmA (349 aa).

ATP contacts are provided by residues 7–14 and Leu-33; that span reads GLSGGVDS. Cys-94 (nucleophile) is an active-site residue. An intrachain disulfide couples Cys-94 to Cys-193. ATP is bound at residue Gly-119. Residues 143-145 form an interaction with tRNA region; sequence KDQ. The Cysteine persulfide intermediate role is filled by Cys-193. Residues 298 to 299 are interaction with tRNA; it reads RY.

This sequence belongs to the MnmA/TRMU family.

It is found in the cytoplasm. It carries out the reaction S-sulfanyl-L-cysteinyl-[protein] + uridine(34) in tRNA + AH2 + ATP = 2-thiouridine(34) in tRNA + L-cysteinyl-[protein] + A + AMP + diphosphate + H(+). Catalyzes the 2-thiolation of uridine at the wobble position (U34) of tRNA, leading to the formation of s(2)U34. This Rippkaea orientalis (strain PCC 8801 / RF-1) (Cyanothece sp. (strain PCC 8801)) protein is tRNA-specific 2-thiouridylase MnmA.